The primary structure comprises 642 residues: MSNRREQRQQAQQFINELAGEAYPNSTRHYESGSRDDIRVAMRLIHQHDSLVGGTEDNPILEPNPPIPVYDTSGPYGDPKENIDVHKGLSPLRKTWIEERSDTRELDGVSSSFAKERENDIFTEDFRFIRSRKPLKAKAGKNVTQLHYARQGVITPEMEYIAIRENMGRQAIKDAELTQQHKGEHFGANLPETITPEFVRQEVAAGRAIIPCNINHPELEPMIIGRNFLVKINANIGNSAVTSSIEEEVEKLVWSTRWGADTIMDLSTGRNIHETREWLLRNSPVPLGTVPIYQALEKVNGVAEDLTWEMFKDTLIEQAEQGVDYFTIHAGVLLEYVHLTAKRVTGIVSRGGSIMAKWCLSHHQQSFLYEHFNDICEICAKYDVALSLGDGLRPGSVADANDDAQFSELRTLGELTKIAWEYDVQVMIEGPGHVPMHMIKENMEEQLKHCHEAPFYTLGPLTTDIAPGYDHFTSGIGAAMIGWYGCAMLCYVTPKEHLGLPNKEDVKQGLITYKIAAHAADLAKGHPGAQIRDNAMSKARFEFRWEDQFNLALDPHTARAYHDETLPQASGKVAHFCSMCGPKFCSMKISQEVRDVAKQAENLAPAQAAEKEKEKGMKDMANAFNKSGAELYHTADSKVELP.

Residues Asn-235, Met-264, Tyr-293, His-329, 349–351 (SRG), 390–393 (DGLR), and Glu-429 contribute to the substrate site. Zn(2+) is bound at residue His-433. A substrate-binding site is contributed by Tyr-456. Residue His-497 participates in Zn(2+) binding. Residues Cys-577, Cys-580, and Cys-585 each coordinate [4Fe-4S] cluster.

It belongs to the ThiC family. In terms of assembly, homodimer. Requires [4Fe-4S] cluster as cofactor.

The catalysed reaction is 5-amino-1-(5-phospho-beta-D-ribosyl)imidazole + S-adenosyl-L-methionine = 4-amino-2-methyl-5-(phosphooxymethyl)pyrimidine + CO + 5'-deoxyadenosine + formate + L-methionine + 3 H(+). Its pathway is cofactor biosynthesis; thiamine diphosphate biosynthesis. Catalyzes the synthesis of the hydroxymethylpyrimidine phosphate (HMP-P) moiety of thiamine from aminoimidazole ribotide (AIR) in a radical S-adenosyl-L-methionine (SAM)-dependent reaction. The chain is Phosphomethylpyrimidine synthase from Alteromonas mediterranea (strain DSM 17117 / CIP 110805 / LMG 28347 / Deep ecotype).